The sequence spans 86 residues: MKVSVVITLAVLGVMFVWASAAELEERGSDQRDSPAWIKSMERIFQSEERECTKFLGGCSEDSECCPHLGCKDVLYYCAWDGTFGK.

The N-terminal stretch at 1-21 (MKVSVVITLAVLGVMFVWASA) is a signal peptide. Positions 22-50 (AELEERGSDQRDSPAWIKSMERIFQSEER) are excised as a propeptide. Intrachain disulfides connect cysteine 52–cysteine 66, cysteine 59–cysteine 71, and cysteine 65–cysteine 78. The residue at position 84 (phenylalanine 84) is a Phenylalanine amide.

Belongs to the neurotoxin 10 (Hwtx-1) family. 37 (Jztx-31) subfamily. In terms of tissue distribution, expressed by the venom gland.

The protein resides in the secreted. In terms of biological role, inhibits both peak current and fast inactivation of voltage-gated sodium channels (Nav) channels. Inhibits the inactivation of Nav on DRG neurons (EC(50)=1.77 uM) and peak current of cardiac myocytes (IC(50)=0.90 uM). This is Mu-theraphotoxin-Cg2a 2 from Chilobrachys guangxiensis (Chinese earth tiger tarantula).